We begin with the raw amino-acid sequence, 123 residues long: Holo-[acyl-carrier-protein] synthase (123 aa).

2 residues coordinate Mg(2+): D8 and E56.

It belongs to the P-Pant transferase superfamily. AcpS family. Mg(2+) is required as a cofactor.

It localises to the cytoplasm. The enzyme catalyses apo-[ACP] + CoA = holo-[ACP] + adenosine 3',5'-bisphosphate + H(+). Its function is as follows. Transfers the 4'-phosphopantetheine moiety from coenzyme A to a Ser of acyl-carrier-protein. The sequence is that of Holo-[acyl-carrier-protein] synthase from Clostridium botulinum (strain Alaska E43 / Type E3).